The following is a 585-amino-acid chain: MPALRKHPHTATKHLFVTGGVVSSLGKGLTASSLGQLLTARGLQVTMQKLDPYLNVDPGTMNPFQHGEVFVTEDGAETDLDVGHYERFLDRNLSGSANVTTGQVYSTVIAKERRGEYLGDTVQVIPHITDEIKRRVLEMAEPDEDGNRPDVVITEVGGTVGDIESLPFLEAARQVRHEVGRENCFFLHCSLVPFMAPSGELKTKPTQHSVAALRSIGIQPDALILRCDRDVPESLKNKIALMCDVDIDGVISTPDAPSIYDIPKVLHREELDAYVVRRLNLAFRDVDWTQWNDLLHRVHEPRETVRIALVGKYIDLSDAYLSVAEALRAGGFAHHAKVEIRWIPSDDCETDVGAATALSDVDGVLIPGGFGIRGIEGKVGAIRYARKRGLPLLGLCLGLQCIVIEAARSVGLTEASSAEFDPDTPDPVISTMADQRDAVAGEADLGGTMRLGAYPAVLQKNSLVAKAYDATEVSERHRHRYEVNNAYRERIAESGLQFSGTSPDGQLVEFVEYPADVHPFLVGTQAHPELKSRPTRPHPLFVAFVGAAVEYNNGERLPVDIPAIPTADHQSNGAEHALEDAPARG.

An amidoligase domain region spans residues 1 to 281 (MPALRKHPHT…DAYVVRRLNL (281 aa)). Serine 23 provides a ligand contact to CTP. A UTP-binding site is contributed by serine 23. ATP contacts are provided by residues 24-29 (SLGKGL) and aspartate 81. Residues aspartate 81 and glutamate 155 each coordinate Mg(2+). Residues 162–164 (DIE), 202–207 (KTKPTQ), and lysine 238 contribute to the CTP site. Residues 202–207 (KTKPTQ) and lysine 238 each bind UTP. Residues 306-554 (RIALVGKYID…VGAAVEYNNG (249 aa)) enclose the Glutamine amidotransferase type-1 domain. Glycine 369 lines the L-glutamine pocket. Cysteine 396 acts as the Nucleophile; for glutamine hydrolysis in catalysis. L-glutamine-binding positions include 397 to 400 (LGLQ), glutamate 419, and arginine 480. Active-site residues include histidine 527 and glutamate 529. The segment at 564–585 (IPTADHQSNGAEHALEDAPARG) is disordered. Basic and acidic residues predominate over residues 576–585 (HALEDAPARG).

It belongs to the CTP synthase family. As to quaternary structure, homotetramer.

The enzyme catalyses UTP + L-glutamine + ATP + H2O = CTP + L-glutamate + ADP + phosphate + 2 H(+). The catalysed reaction is L-glutamine + H2O = L-glutamate + NH4(+). It catalyses the reaction UTP + NH4(+) + ATP = CTP + ADP + phosphate + 2 H(+). It participates in pyrimidine metabolism; CTP biosynthesis via de novo pathway; CTP from UDP: step 2/2. Its activity is regulated as follows. Allosterically activated by GTP, when glutamine is the substrate; GTP has no effect on the reaction when ammonia is the substrate. The allosteric effector GTP functions by stabilizing the protein conformation that binds the tetrahedral intermediate(s) formed during glutamine hydrolysis. Inhibited by the product CTP, via allosteric rather than competitive inhibition. Catalyzes the ATP-dependent amination of UTP to CTP with either L-glutamine or ammonia as the source of nitrogen. Regulates intracellular CTP levels through interactions with the four ribonucleotide triphosphates. In Mycolicibacterium gilvum (strain PYR-GCK) (Mycobacterium gilvum (strain PYR-GCK)), this protein is CTP synthase.